We begin with the raw amino-acid sequence, 69 residues long: Protein translocase subunit SecE (69 aa).

The chain crosses the membrane as a helical span at residues 43–63 (VAGAGILVIGFVGFLIYVLLT).

Belongs to the SecE/SEC61-gamma family. Component of the Sec protein translocase complex. Heterotrimer consisting of SecY (alpha), SecG (beta) and SecE (gamma) subunits. The heterotrimers can form oligomers, although 1 heterotrimer is thought to be able to translocate proteins. Interacts with the ribosome. May interact with SecDF, and other proteins may be involved.

It localises to the cell membrane. Functionally, essential subunit of the Sec protein translocation channel SecYEG. Clamps together the 2 halves of SecY. May contact the channel plug during translocation. The polypeptide is Protein translocase subunit SecE (Methanococcoides burtonii (strain DSM 6242 / NBRC 107633 / OCM 468 / ACE-M)).